The following is an 834-amino-acid chain: RNA-binding protein 12B-B (834 aa).

Residues 154-229 (PYLFLRGLPY…RFIEVMQGSE (76 aa)) enclose the RRM 1 domain. Residues 237-277 (GTATEGGDTPRMRSEEHSPSRRINGRHFRKRSHSKSPRARS) are disordered. The segment covering 244 to 255 (DTPRMRSEEHSP) has biased composition (basic and acidic residues). Basic residues predominate over residues 259-277 (INGRHFRKRSHSKSPRARS). RRM domains are found at residues 283–359 (FYVH…PVSR) and 401–478 (LCIY…LISE). 2 disordered regions span residues 546–572 (GYFR…PWEE) and 621–643 (HFRR…RSRE). A compositionally biased stretch (basic and acidic residues) spans 550–572 (QSDRCSPEDFRHSPEDYRHPWEE). Residue Ser701 is modified to Phosphoserine. The region spanning 758–834 (IRVMISNLPF…GPRKVKLSLL (77 aa)) is the RRM 4 domain.

The chain is RNA-binding protein 12B-B (Rbm12b2) from Mus musculus (Mouse).